The sequence spans 507 residues: MTFAEEKTYKYIRYNHSKFCCVDVLEILPYLSCLTTSDQDRLRASYKQLGNQGTLWELFNTLQRRPGWVEVFIRALRICELPGLAEQVTRVYQSYLPPGASLHSLDPLQSPRIPTTVSEPSAFAAGHTIPDSGFQDKPGYPKPVQDTQPPKSPVENSEEPPQANFGAIPRMSGDSLISSPNPPALSPQPSREHPEQEPELGGPSTANVDSVPIATYGPVSPTVSFQPLPRIAPRTNLSPGVTVSALSAKTTLSSSSTGSAFAKGAGDQAKAATCVSTKEGVPTNSVTTSSVPSIKPVPVNTMSSKLPISTKSTAATPSTVPTNIAPSKLPINSVYTGIVPSKVTASVAKASASTMPPERNNKQAKETLEAPATVVTTGSSLTRPDISSRSLHSGPELSKPGVLVSQVDNEPFSACSMDLAISPSTSLGSEPNHGPEENEYSSFRIQVDKSPSVDLLGSPEPLATQQSPEEEEPCASSVSWAKWLGATSALLAAFLAVMLYRSRHLAQ.

The Cytoplasmic segment spans residues 1-482 (MTFAEEKTYK…PCASSVSWAK (482 aa)). Residues Lys-7 and Lys-10 each participate in a glycyl lysine isopeptide (Lys-Gly) (interchain with G-Cter in ubiquitin) cross-link. Residues 10–77 (KYIRYNHSKF…WVEVFIRALR (68 aa)) enclose the CARD domain. Residues 10 to 77 (KYIRYNHSKF…WVEVFIRALR (68 aa)) form a required for interaction with NLRX1 region. Residue Cys-79 is the site of S-palmitoyl cysteine attachment. Disordered stretches follow at residues 123–238 (FAAG…TNLS), 250–326 (TTLS…NIAP), and 350–401 (ASAS…SKPG). Residues 143–147 (PVQDT) form an interaction with TRAF2 region. Phosphoserine occurs at positions 152, 157, 172, 178, 186, and 220. Residues 153-158 (PVENSE) form an interaction with TRAF6 region. Arg-234 carries the post-translational modification Asymmetric dimethylarginine. Low complexity-rich tracts occupy residues 250-266 (TTLS…KGAG) and 281-293 (VPTN…SVPS). Ser-256 carries the post-translational modification Phosphoserine. Residues 300–325 (NTMSSKLPISTKSTAATPSTVPTNIA) are compositionally biased toward polar residues. Residue Lys-305 forms a Glycyl lysine isopeptide (Lys-Gly) (interchain with G-Cter in ubiquitin) linkage. The interval 340-507 (PSKVTASVAK…MLYRSRHLAQ (168 aa)) is interaction with DHX33. The segment covering 359–368 (RNNKQAKETL) has biased composition (basic and acidic residues). Residues 374–391 (VVTTGSSLTRPDISSRSL) show a composition bias toward polar residues. The residue at position 387 (Ser-387) is a Phosphoserine. The pLxIS motif signature appears at 419 to 422 (LAIS). Ser-422 is modified (phosphoserine; by TBK1). Residues 423–474 (PSTSLGSEPNHGPEENEYSSFRIQVDKSPSVDLLGSPEPLATQQSPEEEEPC) are disordered. The segment at 435–440 (PEENEY) is interaction with TRAF6. A helical membrane pass occupies residues 483-500 (WLGATSALLAAFLAVMLY). The Mitochondrial intermembrane portion of the chain corresponds to 501–507 (RSRHLAQ).

In terms of assembly, self-associates and polymerizes (via CARD domains) to form 400 nM long three-stranded helical filaments on mitochondria, filament nucleation requires interaction with RIGI whose CARD domains act as a template for filament assembly. Interacts with RIGI, IFIH1/MDA5, TRAF2, TRAF6 and C1QBP. May interact with FADD, RIPK1, CHUK and IKBKB. Interacts (when phosphorylated) with IRF3; following activation and phosphorylation on the pLxIS motif by TBK1, recruits IRF3. Interacts with NLRX1. Interaction with NLRX1 requires the CARD domain. Interacts with PSMA7. Interacts with TRAFD1. Interacts (via C-terminus) with PCBP2 in a complex containing MAVS/IPS1, PCBP2 and ITCH. Interacts with CYLD. Interacts with SRC. Interacts with DHX58/LGP2 and IKBKE. Interacts with STING1. Interacts with IFIT3 (via N-terminus). Interacts with TBK1 only in the presence of IFIT3. Interacts with TTLL12; the interaction prevents MAVS binding to TBK1 and IKBKE. Interacts with MUL1. Interacts with ANKRD17. Interacts with NDFIP1. Interacts with SMURF1; the interaction is mediated by NDFIP1 and leads to MAVS ubiquitination and degradation. Interacts with UBXN1; this interaction inhibits MAVS-mediated antiviral pathway. Interacts (via C-terminus) with GPATCH3; the interaction is markedly increased upon viral infection. Directly interacts (via CARD domain) with ATG5 and ATG12, either as ATG5 and ATG12 monomers or as ATG12-ATG5 conjugates. Interacts with DHX33 (via the helicase C-terminal domain). Interacts with DDX3X (via C-terminus); this interaction may occur rapidly, but transiently after viral infection. The interaction with DDX3X potentiates MAVS-mediated IFNB induction. Conversely inhibition of this interaction prevents MAVS-mediated IFNB induction. Transiently interacts with TRAF3 early during viral infection. Interacts with CLPB. Interacts with TRAF3IP3. Interacts with TOMM70; the interaction is enhanced by virus infection. Interacts with ZNFX1. Interacts with DHX15. Interacts with N4BP3; this interaction promotes the polyubiquitination of MAVS. Interacts with TAX1BP1; this interaction induces MAVS polyubiquitination. Interacts with NLRP3; promoting NLRP3 recruitment to mitochondria and activation of the NLRP3 inflammasome. Interacts with ECSIT; this interaction bridges RIGI to the MAVS complex at the mitochondrion. Interacts with UBL7; this interaction promotes MAVS 'Lys-27'-linked ubiquitination leading to type I interferon production. Interacts (via transmembrane domain) with SMIM30/MAVI1 (via transmembrane domain); the interaction disrupts MAVS interaction with RIGI and inhibits MAVS aggregation, resulting in the repression of type I interferon signaling and innate immune responses. Post-translationally, following activation, phosphorylated by TBK1 at Ser-422 in the pLxIS motif. The phosphorylated pLxIS motif constitutes an IRF3-binding motif, leading to recruitment of the transcription factor IRF3 to induce type-I interferons and other cytokines. In terms of processing, ubiquitinated. Undergoes 'Lys-48'-linked polyubiquitination catalyzed by ITCH; ITCH-dependent polyubiquitination is mediated by the interaction with PCBP2 and leads to MAVS/IPS1 proteasomal degradation. Ubiquitinated by RNF125, leading to its degradation by the proteasome. Undergoes 'Lys-48'-linked ubiquitination catalyzed by SMURF1. Undergoes 'Lys-48'-linked ubiquitination catalyzed by MARCHF5 at Lys-7, leading to proteasomal degradation. Ubiquitinated via 'Lys-63'-linked ubiquitination at Lys-10 by TRIM31, promoting MAVS polymerization and formation of three-stranded helical filaments on mitochondria. Undergoes 'Lys-63'-linked ubiquitination leading to enhanced interaction between MAVS and TRAF2. Undergoes 'Lys-27'-linked ubiquitination by UBE2N and TRIM21 leading to enhanced interaction between MAVS and TBK1. Deubiquitinated by USP10 leading to attenuation of RIGI-mediated MAVS aggregation and production of type I interferon. Undergoes 'Lys-48'-linked polyubiquitination catalyzed by RNF115 leading to its degradation. Proteolytically cleaved by apoptotic caspases during apoptosis, leading to its inactivation. Cleavage by CASP3 during virus-induced apoptosis inactivates it, preventing cytokine overproduction. Post-translationally, palmitoylated by ZHDDC4. Palmitoylation promotes MAVS stabilization and activation by inhibiting 'Lys-48'- but facilitating 'Lys-63'-linked ubiquitination.

It localises to the mitochondrion outer membrane. Its subcellular location is the mitochondrion. The protein resides in the peroxisome. Adapter required for innate immune defense against viruses. Acts downstream of DHX33, RIGI and IFIH1/MDA5, which detect intracellular dsRNA produced during viral replication, to coordinate pathways leading to the activation of NF-kappa-B, IRF3 and IRF7, and to the subsequent induction of antiviral cytokines such as IFN-beta and RANTES (CCL5). Peroxisomal and mitochondrial MAVS act sequentially to create an antiviral cellular state. Upon viral infection, peroxisomal MAVS induces the rapid interferon-independent expression of defense factors that provide short-term protection, whereas mitochondrial MAVS activates an interferon-dependent signaling pathway with delayed kinetics, which amplifies and stabilizes the antiviral response. May activate the same pathways following detection of extracellular dsRNA by TLR3. May protect cells from apoptosis. Involved in NLRP3 inflammasome activation by mediating NLRP3 recruitment to mitochondria. The protein is Mitochondrial antiviral-signaling protein (Mavs) of Rattus norvegicus (Rat).